The following is a 259-amino-acid chain: UPF0246 protein PSHAa2558 (259 aa).

Belongs to the UPF0246 family.

In Pseudoalteromonas translucida (strain TAC 125), this protein is UPF0246 protein PSHAa2558.